A 172-amino-acid polypeptide reads, in one-letter code: Ribosome maturation factor RimM (172 aa).

The region spanning 96-168 (EGEFYYHQII…RVDVELMEGL (73 aa)) is the PRC barrel domain.

The protein belongs to the RimM family. In terms of assembly, binds ribosomal protein uS19.

It localises to the cytoplasm. Functionally, an accessory protein needed during the final step in the assembly of 30S ribosomal subunit, possibly for assembly of the head region. Essential for efficient processing of 16S rRNA. May be needed both before and after RbfA during the maturation of 16S rRNA. It has affinity for free ribosomal 30S subunits but not for 70S ribosomes. This chain is Ribosome maturation factor RimM, found in Streptococcus pyogenes serotype M6 (strain ATCC BAA-946 / MGAS10394).